The following is a 354-amino-acid chain: Deubiquitination-protection protein dph1 (354 aa).

One can recognise a Ubiquitin-like domain in the interval 1 to 78; sequence MTNISLTIKA…SIHLVKTLGQ (78 aa). The UBA domain occupies 309–353; sequence PPEERYAEQLSQLNEMGFVDFERNVQALRRSGGNVQGAIESLLSD.

Functionally, protects ubiquitin chains against dissambly by deubiquitinating enzymes thereby promoting protein degradation. This Schizosaccharomyces pombe (strain 972 / ATCC 24843) (Fission yeast) protein is Deubiquitination-protection protein dph1 (dph1).